A 107-amino-acid chain; its full sequence is Replication initiation control protein YabA (107 aa).

The Zn(2+) site is built by His-81, Cys-83, Cys-97, and Cys-100.

This sequence belongs to the YabA family. As to quaternary structure, homotetramer. Interacts with both DnaA and DnaN, acting as a bridge between these two proteins. Zn(2+) serves as cofactor.

It localises to the cytoplasm. It is found in the nucleoid. Its function is as follows. Involved in control of chromosome replication initiation. Inhibits the cooperative binding of DnaA to the oriC region, thus negatively regulating initiation of chromosome replication. Inhibits the ability of DnaA-ATP to form a helix on DNA; does not disassemble preformed DnaA-DNA helices. Decreases the residence time of DnaA on the chromosome at its binding sites (oriC, replication forks and promoter-binding sites). Tethers DnaA to the replication machinery via the DNA polymerase beta sliding clamp subunit (dnaN). Associates with oriC and other DnaA targets on the chromosome in a DnaA-dependent manner. This Streptococcus equi subsp. zooepidemicus (strain MGCS10565) protein is Replication initiation control protein YabA.